Here is a 164-residue protein sequence, read N- to C-terminus: V-type proton ATPase subunit c3 (164 aa).

Residues M1–P11 are Lumenal-facing. The helical transmembrane segment at F12–G32 threads the bilayer. The Cytoplasmic portion of the chain corresponds to T33–S54. The helical transmembrane segment at I55–I75 threads the bilayer. Topologically, residues S76–H94 are lumenal. The helical transmembrane segment at L95–G116 threads the bilayer. Residues D117 to K128 lie on the Cytoplasmic side of the membrane. Residues L129–L154 form a helical membrane-spanning segment. The Lumenal segment spans residues S155–E164.

The protein belongs to the V-ATPase proteolipid subunit family. V-ATPase is a heteromultimeric enzyme composed of a peripheral catalytic V1 complex (components A to H) attached to an integral membrane V0 proton pore complex (components: a, c, c'', d and e). The proteolipid components c and c'' are present as a hexameric ring that forms the proton-conducting pore. Expressed in leaf, root, flower and silique.

It localises to the vacuole membrane. Functionally, proton-conducting pore forming subunit of the membrane integral V0 complex of vacuolar ATPase. V-ATPase is responsible for acidifying a variety of intracellular compartments in eukaryotic cells. The protein is V-type proton ATPase subunit c3 (VHA-c3) of Arabidopsis thaliana (Mouse-ear cress).